Consider the following 43-residue polypeptide: Protein PsbN (43 aa).

Residues 4–24 (GILIVIFISCLLVSFTGYAVY) form a helical membrane-spanning segment.

The protein belongs to the PsbN family.

The protein localises to the plastid. It localises to the chloroplast thylakoid membrane. Its function is as follows. May play a role in photosystem I and II biogenesis. This chain is Protein PsbN, found in Coleochaete orbicularis (Charophycean green alga).